The chain runs to 369 residues: uncharacterized protein (369 aa).

Lysine 184 bears the N6-(pyridoxal phosphate)lysine mark.

The protein belongs to the class-V pyridoxal-phosphate-dependent aminotransferase family. Pyridoxal 5'-phosphate is required as a cofactor.

This is an uncharacterized protein from Helicobacter pylori (strain J99 / ATCC 700824) (Campylobacter pylori J99).